A 78-amino-acid chain; its full sequence is Sec-independent protein translocase protein TatA (78 aa).

A helical transmembrane segment spans residues 1 to 21; the sequence is MFGRIGLPEILLILAIALIIF. The tract at residues 50 to 78 is disordered; that stretch reads EVNEVEEEVKENKSSDVKENEDNKTEKST. Residues 59–78 show a composition bias toward basic and acidic residues; the sequence is KENKSSDVKENEDNKTEKST.

The protein belongs to the TatA/E family. In terms of assembly, forms a complex with TatC.

The protein localises to the cell membrane. In terms of biological role, part of the twin-arginine translocation (Tat) system that transports large folded proteins containing a characteristic twin-arginine motif in their signal peptide across membranes. TatA could form the protein-conducting channel of the Tat system. The chain is Sec-independent protein translocase protein TatA from Natranaerobius thermophilus (strain ATCC BAA-1301 / DSM 18059 / JW/NM-WN-LF).